A 303-amino-acid chain; its full sequence is Coenzyme PQQ synthesis protein B (303 aa).

The protein belongs to the PqqB family.

It participates in cofactor biosynthesis; pyrroloquinoline quinone biosynthesis. May be involved in the transport of PQQ or its precursor to the periplasm. The chain is Coenzyme PQQ synthesis protein B from Acinetobacter baumannii (strain SDF).